Here is a 366-residue protein sequence, read N- to C-terminus: Chalcone synthase B (366 aa).

Cys172 is an active-site residue.

Belongs to the thiolase-like superfamily. Chalcone/stilbene synthases family.

It catalyses the reaction (E)-4-coumaroyl-CoA + 3 malonyl-CoA + 3 H(+) = 2',4,4',6'-tetrahydroxychalcone + 3 CO2 + 4 CoA. It functions in the pathway secondary metabolite biosynthesis; flavonoid biosynthesis. Its function is as follows. The primary product of this enzyme is 4,2',4',6'-tetrahydroxychalcone (also termed naringenin-chalcone or chalcone) which can under specific conditions spontaneously isomerize into naringenin. This Ipomoea trifida (Morning glory) protein is Chalcone synthase B (CHSB).